The sequence spans 443 residues: Ribosomal protein uS12 methylthiotransferase RimO (443 aa).

One can recognise an MTTase N-terminal domain in the interval 5–115; the sequence is PNIGFISLGC…VMKHVHKYVP (111 aa). Cys-14, Cys-50, Cys-79, Cys-147, Cys-151, and Cys-154 together coordinate [4Fe-4S] cluster. One can recognise a Radical SAM core domain in the interval 133-374; the sequence is LTPKHYAYLK…MQLQQKISAE (242 aa). Residues 377–443 enclose the TRAM domain; that stretch reads RQKIGRTLSV…ADEYDLWGEI (67 aa).

It belongs to the methylthiotransferase family. RimO subfamily. The cofactor is [4Fe-4S] cluster.

Its subcellular location is the cytoplasm. It carries out the reaction L-aspartate(89)-[ribosomal protein uS12]-hydrogen + (sulfur carrier)-SH + AH2 + 2 S-adenosyl-L-methionine = 3-methylsulfanyl-L-aspartate(89)-[ribosomal protein uS12]-hydrogen + (sulfur carrier)-H + 5'-deoxyadenosine + L-methionine + A + S-adenosyl-L-homocysteine + 2 H(+). In terms of biological role, catalyzes the methylthiolation of an aspartic acid residue of ribosomal protein uS12. The chain is Ribosomal protein uS12 methylthiotransferase RimO from Histophilus somni (strain 2336) (Haemophilus somnus).